Consider the following 668-residue polypeptide: Macrolide export ATP-binding/permease protein MacB 1/2 (668 aa).

One can recognise an ABC transporter domain in the interval 9–247 (IRLRGVGREY…PGPGPAQAPQ (239 aa)). 45 to 52 (GASGSGKS) serves as a coordination point for ATP. Positions 230-257 (RTGAPAADPGPGPAQAPQPAPQPAPVQA) are disordered. The span at 237–255 (DPGPGPAQAPQPAPQPAPV) shows a compositional bias: pro residues. 4 consecutive transmembrane segments (helical) span residues 294–314 (FLTM…VALG), 541–561 (LALL…IGVM), 598–618 (LVCV…GLAF), and 634–654 (MLAA…LPAV).

This sequence belongs to the ABC transporter superfamily. Macrolide exporter (TC 3.A.1.122) family. In terms of assembly, homodimer.

The protein resides in the cell inner membrane. Its function is as follows. Non-canonical ABC transporter that contains transmembrane domains (TMD), which form a pore in the inner membrane, and an ATP-binding domain (NBD), which is responsible for energy generation. Confers resistance against macrolides. In Paracoccus denitrificans (strain Pd 1222), this protein is Macrolide export ATP-binding/permease protein MacB 1/2.